Consider the following 688-residue polypeptide: Collagen alpha-2(IX) chain (688 aa).

The N-terminal stretch at 1 to 22 (MAPAADPRSLLVLLQVLGLALA) is a signal peptide. Residues 26–162 (GLPGEPGPPG…PGKPGRPGTI (137 aa)) are triple-helical region 4 (COL4). Disordered regions lie at residues 26–520 (GLPG…RDAS), 549–578 (GATG…PGPR), and 590–662 (IGNT…LPGF). 2 stretches are compositionally biased toward pro residues: residues 30 to 42 (EPGP…PPGV) and 105 to 126 (LPGP…PGPV). A compositionally biased stretch (low complexity) spans 128-138 (LPGEIGLTGPK). Positions 143–156 (PEGPSGPPGPPGKP) are enriched in pro residues. The residue at position 159 (Pro-159) is a 4-hydroxyproline. Positions 163–179 (QGLEGSADFLCPTNCPA) are nonhelical region 4 (NC4). A glycan (O-linked (Xyl...) (glycosaminoglycan) serine) is linked at Ser-168. The triple-helical region 3 (COL3) stretch occupies residues 180 to 518 (GVKGPPGLQG…PGRQGVAGRD (339 aa)). Lys-182 carries the post-translational modification 5-hydroxylysine. Lys-182 carries an O-linked (Gal...) hydroxylysine glycan. Low complexity-rich tracts occupy residues 251–265 (KGMV…SPGE) and 394–412 (PVGQ…EQGP). A compositionally biased stretch (gly residues) spans 435–444 (GPRGGVGDPG). Positions 497-506 (RGLVGDRGLP) are enriched in low complexity. Residues 519–548 (ASDQHIEDVVLKMLQEQLAEMAVSAKREAL) form a nonhelical region 3 (NC3) region. Positions 549 to 631 (GATGMMGPPG…PGLPGRPGQA (83 aa)) are triple-helical region 2 (COL2). The segment covering 556 to 565 (PPGPPGPPGY) has biased composition (pro residues). Basic and acidic residues predominate over residues 598-610 (KRGEKGDQGEVGR). Positions 632 to 633 (IN) are nonhelical region 2 (NC2). Residues 634–663 (GKDGDRGAPGAPGEAGRPGLPGPIGLPGFC) are triple-helical region 1 (COL1). Residues 641–651 (APGAPGEAGRP) show a composition bias toward low complexity. The tract at residues 664 to 688 (EPAACLGASAYASGRLTEPGSIKGP) is nonhelical region 1 (NC1).

Belongs to the fibril-associated collagens with interrupted helices (FACIT) family. Heterotrimer of an alpha 1(IX), an alpha 2(IX) and an alpha 3(IX) chain. The chains are linked to each other by interchain disulfide bonds. Trimers are also cross-linked via hydroxylysines. Prolines at the third position of the tripeptide repeating unit (G-X-Y) are hydroxylated in some or all of the chains. Post-translationally, covalently linked to the telopeptides of type II collagen by hydroxylysine-derived cross-links.

It is found in the secreted. The protein resides in the extracellular space. The protein localises to the extracellular matrix. Functionally, structural component of hyaline cartilage and vitreous of the eye. The sequence is that of Collagen alpha-2(IX) chain from Bos taurus (Bovine).